A 405-amino-acid chain; its full sequence is L-rhamnonate dehydratase (405 aa).

Residues H33 and R59 each coordinate substrate. Mg(2+) is bound by residues D226, E252, and E280. The active-site Proton acceptor is the H329. E349 lines the substrate pocket.

It belongs to the mandelate racemase/muconate lactonizing enzyme family. RhamD subfamily. As to quaternary structure, homooctamer; tetramer of dimers. The cofactor is Mg(2+).

The catalysed reaction is L-rhamnonate = 2-dehydro-3-deoxy-L-rhamnonate + H2O. In terms of biological role, catalyzes the dehydration of L-rhamnonate to 2-keto-3-deoxy-L-rhamnonate (KDR). This chain is L-rhamnonate dehydratase, found in Escherichia coli O6:K15:H31 (strain 536 / UPEC).